The sequence spans 162 residues: NAD(P)H-quinone oxidoreductase subunit N (162 aa).

Belongs to the complex I NdhN subunit family. NDH-1 can be composed of about 15 different subunits; different subcomplexes with different compositions have been identified which probably have different functions.

It localises to the cellular thylakoid membrane. The catalysed reaction is a plastoquinone + NADH + (n+1) H(+)(in) = a plastoquinol + NAD(+) + n H(+)(out). It carries out the reaction a plastoquinone + NADPH + (n+1) H(+)(in) = a plastoquinol + NADP(+) + n H(+)(out). NDH-1 shuttles electrons from an unknown electron donor, via FMN and iron-sulfur (Fe-S) centers, to quinones in the respiratory and/or the photosynthetic chain. The immediate electron acceptor for the enzyme in this species is believed to be plastoquinone. Couples the redox reaction to proton translocation, and thus conserves the redox energy in a proton gradient. Cyanobacterial NDH-1 also plays a role in inorganic carbon-concentration. The sequence is that of NAD(P)H-quinone oxidoreductase subunit N from Nostoc sp. (strain PCC 7120 / SAG 25.82 / UTEX 2576).